Here is a 251-residue protein sequence, read N- to C-terminus: Aspartate/glutamate leucyltransferase (251 aa).

Belongs to the R-transferase family. Bpt subfamily.

The protein localises to the cytoplasm. It catalyses the reaction N-terminal L-glutamyl-[protein] + L-leucyl-tRNA(Leu) = N-terminal L-leucyl-L-glutamyl-[protein] + tRNA(Leu) + H(+). The catalysed reaction is N-terminal L-aspartyl-[protein] + L-leucyl-tRNA(Leu) = N-terminal L-leucyl-L-aspartyl-[protein] + tRNA(Leu) + H(+). Its function is as follows. Functions in the N-end rule pathway of protein degradation where it conjugates Leu from its aminoacyl-tRNA to the N-termini of proteins containing an N-terminal aspartate or glutamate. The sequence is that of Aspartate/glutamate leucyltransferase from Xanthomonas oryzae pv. oryzae (strain MAFF 311018).